The sequence spans 237 residues: Probable GTP-binding protein EngB (237 aa).

The EngB-type G domain occupies 13-188; it reads TGYEIAFAGR…ASVMAGRLNY (176 aa). GTP-binding positions include 21-28, 48-52, 67-70, 134-137, and 167-169; these read GRSNAGKS, GRTQM, DLPG, TKAD, and FSS. The Mg(2+) site is built by serine 28 and threonine 50. Positions 207 to 220 are enriched in acidic residues; sequence DDLNDELMDQDETS. The disordered stretch occupies residues 207 to 237; sequence DDLNDELMDQDETSEFNTENIDDHLDQEPKI. Basic and acidic residues predominate over residues 227-237; that stretch reads IDDHLDQEPKI.

It belongs to the TRAFAC class TrmE-Era-EngA-EngB-Septin-like GTPase superfamily. EngB GTPase family. Mg(2+) is required as a cofactor.

Its function is as follows. Necessary for normal cell division and for the maintenance of normal septation. This is Probable GTP-binding protein EngB from Acinetobacter baylyi (strain ATCC 33305 / BD413 / ADP1).